Consider the following 267-residue polypeptide: Putative [LysW]-aminoadipate/[LysW]-glutamate kinase (267 aa).

Substrate-binding positions include 37–38, R64, and N169; that span reads GG.

The protein belongs to the acetylglutamate kinase family. LysZ subfamily.

The protein resides in the cytoplasm. It carries out the reaction [amino-group carrier protein]-C-terminal-N-(1,4-dicarboxybutan-1-yl)-L-glutamine + ATP = [amino-group carrier protein]-C-terminal-N-(1-carboxy-5-phosphooxy-5-oxopentan-1-yl)-L-glutamine + ADP. The enzyme catalyses [amino-group carrier protein]-C-terminal-gamma-(L-glutamyl)-L-glutamate + ATP = [amino-group carrier protein]-C-terminal-gamma-(5-phospho-L-glutamyl)-L-glutamate + ADP. It participates in amino-acid biosynthesis; L-lysine biosynthesis via AAA pathway; L-lysine from L-alpha-aminoadipate (Thermus route): step 2/5. It functions in the pathway amino-acid biosynthesis; L-arginine biosynthesis. Functionally, involved in both the arginine and lysine biosynthetic pathways. Phosphorylates the LysW-bound precursors glutamate (for arginine biosynthesis), respectively alpha-aminoadipate (for lysine biosynthesis). This Nitrosopumilus maritimus (strain SCM1) protein is Putative [LysW]-aminoadipate/[LysW]-glutamate kinase.